A 364-amino-acid polypeptide reads, in one-letter code: Phosphoserine aminotransferase (364 aa).

Arg42 contacts L-glutamate. Pyridoxal 5'-phosphate contacts are provided by residues 76–77, Trp100, Thr150, Asp169, and Gln192; that span reads AS. Lys193 is modified (N6-(pyridoxal phosphate)lysine). 234-235 contacts pyridoxal 5'-phosphate; sequence NT.

This sequence belongs to the class-V pyridoxal-phosphate-dependent aminotransferase family. SerC subfamily. Homodimer. Pyridoxal 5'-phosphate is required as a cofactor.

The protein localises to the cytoplasm. The catalysed reaction is O-phospho-L-serine + 2-oxoglutarate = 3-phosphooxypyruvate + L-glutamate. It carries out the reaction 4-(phosphooxy)-L-threonine + 2-oxoglutarate = (R)-3-hydroxy-2-oxo-4-phosphooxybutanoate + L-glutamate. It functions in the pathway amino-acid biosynthesis; L-serine biosynthesis; L-serine from 3-phospho-D-glycerate: step 2/3. In terms of biological role, catalyzes the reversible conversion of 3-phosphohydroxypyruvate to phosphoserine and of 3-hydroxy-2-oxo-4-phosphonooxybutanoate to phosphohydroxythreonine. The protein is Phosphoserine aminotransferase of Shouchella clausii (strain KSM-K16) (Alkalihalobacillus clausii).